A 353-amino-acid chain; its full sequence is tRNA N6-adenosine threonylcarbamoyltransferase (353 aa).

Histidine 111 and histidine 115 together coordinate Fe cation. Substrate contacts are provided by residues 134–138, aspartate 167, glycine 180, aspartate 184, and asparagine 279; that span reads LVSGG. Fe cation is bound at residue aspartate 307.

This sequence belongs to the KAE1 / TsaD family. Requires Fe(2+) as cofactor.

The protein localises to the cytoplasm. It carries out the reaction L-threonylcarbamoyladenylate + adenosine(37) in tRNA = N(6)-L-threonylcarbamoyladenosine(37) in tRNA + AMP + H(+). Required for the formation of a threonylcarbamoyl group on adenosine at position 37 (t(6)A37) in tRNAs that read codons beginning with adenine. Is involved in the transfer of the threonylcarbamoyl moiety of threonylcarbamoyl-AMP (TC-AMP) to the N6 group of A37, together with TsaE and TsaB. TsaD likely plays a direct catalytic role in this reaction. The polypeptide is tRNA N6-adenosine threonylcarbamoyltransferase (Thermosynechococcus vestitus (strain NIES-2133 / IAM M-273 / BP-1)).